The chain runs to 424 residues: Elongation factor 1-alpha (424 aa).

The region spanning 5 to 223 (KPHLNLITIG…DAFKVPEKPI (219 aa)) is the tr-type G domain. Residues 14–21 (GHVDHGKS) form a G1 region. Residue 14 to 21 (GHVDHGKS) participates in GTP binding. Ser-21 contributes to the Mg(2+) binding site. The segment at 70–74 (GVTID) is G2. Residues 91–94 (DAPG) are G3. GTP contacts are provided by residues 91–95 (DAPGH) and 148–151 (NKMD). The interval 148–151 (NKMD) is G4. The segment at 187-189 (SGY) is G5.

This sequence belongs to the TRAFAC class translation factor GTPase superfamily. Classic translation factor GTPase family. EF-Tu/EF-1A subfamily.

It localises to the cytoplasm. The catalysed reaction is GTP + H2O = GDP + phosphate + H(+). Its function is as follows. GTP hydrolase that promotes the GTP-dependent binding of aminoacyl-tRNA to the A-site of ribosomes during protein biosynthesis. This Thermoplasma acidophilum (strain ATCC 25905 / DSM 1728 / JCM 9062 / NBRC 15155 / AMRC-C165) protein is Elongation factor 1-alpha.